The chain runs to 213 residues: Orotate phosphoribosyltransferase (213 aa).

Position 26 (K26) interacts with 5-phospho-alpha-D-ribose 1-diphosphate. 34-35 (FF) provides a ligand contact to orotate. 5-phospho-alpha-D-ribose 1-diphosphate is bound by residues 72-73 (YK), R99, K100, K103, H105, and 124-132 (DDVITAGTA). Residues T128 and R156 each contribute to the orotate site.

This sequence belongs to the purine/pyrimidine phosphoribosyltransferase family. PyrE subfamily. As to quaternary structure, homodimer. Mg(2+) is required as a cofactor.

It catalyses the reaction orotidine 5'-phosphate + diphosphate = orotate + 5-phospho-alpha-D-ribose 1-diphosphate. Its pathway is pyrimidine metabolism; UMP biosynthesis via de novo pathway; UMP from orotate: step 1/2. Its function is as follows. Catalyzes the transfer of a ribosyl phosphate group from 5-phosphoribose 1-diphosphate to orotate, leading to the formation of orotidine monophosphate (OMP). The protein is Orotate phosphoribosyltransferase of Vibrio parahaemolyticus serotype O3:K6 (strain RIMD 2210633).